A 581-amino-acid chain; its full sequence is Penicillin-binding protein activator LpoA (581 aa).

An N-terminal signal peptide occupies residues 1–26; it reads MLSILMQGLRLKKCFLPILVMFFLAG. C27 is lipidated: N-palmitoyl cysteine. C27 carries S-diacylglycerol cysteine lipidation.

Belongs to the LpoA family. In terms of assembly, interacts with PBP1a.

It localises to the cell outer membrane. In terms of biological role, regulator of peptidoglycan synthesis that is essential for the function of penicillin-binding protein 1A (PBP1a). In Histophilus somni (strain 129Pt) (Haemophilus somnus), this protein is Penicillin-binding protein activator LpoA.